A 1518-amino-acid chain; its full sequence is WD repeat-containing protein 62 (1518 aa).

Ala2 carries the post-translational modification N-acetylalanine. Ser33 carries the post-translational modification Phosphoserine. Thr46 carries the post-translational modification Phosphothreonine. Phosphoserine is present on Ser49. Thr50 is subject to Phosphothreonine. Position 52 is a phosphoserine (Ser52). WD repeat units lie at residues 109-150, 153-194, 196-234, 291-330, 357-396, 402-450, 490-529, 532-574, 578-618, 626-665, 671-713, and 714-752; these read TARK…QVAE, GHKY…VVAS, KVSC…ETKV, INLK…YLAN, AVYP…RVGK, FHSS…DSHW, DVKA…ELVK, AHDA…NLEQ, DHSS…DGLH, AEKT…QKKC, GDEG…KMFG, and HSEI…TNCM. Ser501 bears the Phosphoserine mark. Residues 762–772 are compositionally biased toward basic and acidic residues; the sequence is RQQQQHTNDKK. Disordered regions lie at residues 762–824 and 908–935; these read RQQQ…DPDP and ASLL…KESS. Positions 781–790 are enriched in polar residues; the sequence is TYVSTPSEIH. Positions 797–809 are enriched in acidic residues; it reads QTEDDLEEECEPE. The WD 13 repeat unit spans residues 803–846; the sequence is EEECEPEEMLKTPSKDSLDPDPRCLLTNGKLPLWAKRLLGDDDV. Residues 810–824 show a composition bias toward basic and acidic residues; sequence EMLKTPSKDSLDPDP. A compositionally biased stretch (low complexity) spans 908-920; that stretch reads ASLLSESESPQEA. Ser944 is modified (phosphoserine). The tract at residues 962 to 1055 is disordered; it reads EVEAGPGDQQ…PSSSLPQTPE (94 aa). 2 stretches are compositionally biased toward polar residues: residues 971 to 981 and 1045 to 1054; these read QGDSYLRVSSD and VPSSSLPQTP. A Phosphothreonine modification is found at Thr1053. Ser1070, Ser1093, Ser1101, Ser1123, Ser1144, Ser1228, Ser1248, and Ser1249 each carry phosphoserine. The stretch at 1132–1173 is one WD 14 repeat; sequence GGSQPRAGTGYASPDRTHVLAAGKAEETLEAWRPPPPCLTSL. A WD 15 repeat occupies 1255-1293; sequence SLGQELQAITTATTPSLDSEGQEPALRSWGNHEARANLR. At Thr1268 the chain carries Phosphothreonine. Residues 1339–1377 form a disordered region; it reads FRPSLPAPESPGLPAHPSNPQLPEARPGIPGGTASLLEP.

In terms of assembly, can form homodimers (via C-terminus). Interacts (via C-terminus) with MAPKBP1 (via C-terminus). Interacts with CDK5RAP2, CEP152, CEP63 and KIAA0753. CEP63, CDK5RAP2, CEP152, WDR62 are proposed to form a stepwise assembled complex at the centrosome forming a ring near parental centrioles. In terms of tissue distribution, present in fetal brain, enriched within the ventricular and subventricular zone (at protein level). In the embryonic brain it is expressed in mitotic neural precursor cells.

The protein resides in the nucleus. It is found in the cytoplasm. It localises to the cytoskeleton. Its subcellular location is the spindle pole. The protein localises to the microtubule organizing center. The protein resides in the centrosome. It is found in the centriole. In terms of biological role, required for cerebral cortical development. Plays a role in neuronal proliferation and migration. Plays a role in mother-centriole-dependent centriole duplication; the function also seems to involve CEP152, CDK5RAP2 and CEP63 through a stepwise assembled complex at the centrosome that recruits CDK2 required for centriole duplication. The sequence is that of WD repeat-containing protein 62 (WDR62) from Homo sapiens (Human).